Here is a 193-residue protein sequence, read N- to C-terminus: nitroreductase FRM2 (193 aa).

The protein belongs to the nitroreductase family. The cofactor is FMN.

The protein resides in the cytoplasm. It is found in the nucleus. The enzyme catalyses 4-(hydroxyamino)quinoline N-oxide + 2 NAD(+) + H2O = 4-nitroquinoline N-oxide + 2 NADH + 2 H(+). Functionally, type II nitroreductase, able to reduce 4-nitroquinoline N-oxide (4-NQO) into 4-aminoquinoline-N-oxide (4-AQO) via 4-hydroxyaminoquinoline (4-HAQO), using NADH as reductant. involved in the oxidative stress response. Plays a possible role in the metal stress response. Involved in negative regulation of fatty acid metabolism. The protein is nitroreductase FRM2 of Saccharomyces cerevisiae (strain ATCC 204508 / S288c) (Baker's yeast).